Here is a 498-residue protein sequence, read N- to C-terminus: Glycerol kinase (498 aa).

Residue threonine 14 coordinates ADP. ATP-binding residues include threonine 14, threonine 15, and serine 16. A sn-glycerol 3-phosphate-binding site is contributed by threonine 14. Arginine 18 is an ADP binding site. Positions 84, 85, 136, and 245 each coordinate sn-glycerol 3-phosphate. Arginine 84, glutamate 85, tyrosine 136, aspartate 245, and glutamine 246 together coordinate glycerol. Residues threonine 267 and glycine 310 each coordinate ADP. ATP-binding residues include threonine 267, glycine 310, glutamine 314, and glycine 410. ADP-binding residues include glycine 410 and asparagine 414.

It belongs to the FGGY kinase family.

It carries out the reaction glycerol + ATP = sn-glycerol 3-phosphate + ADP + H(+). It participates in polyol metabolism; glycerol degradation via glycerol kinase pathway; sn-glycerol 3-phosphate from glycerol: step 1/1. Its activity is regulated as follows. Inhibited by fructose 1,6-bisphosphate (FBP). Key enzyme in the regulation of glycerol uptake and metabolism. Catalyzes the phosphorylation of glycerol to yield sn-glycerol 3-phosphate. The polypeptide is Glycerol kinase (Rhodospirillum centenum (strain ATCC 51521 / SW)).